Consider the following 122-residue polypeptide: Biogenesis of lysosome-related organelles complex 1 subunit CNL1 (122 aa).

Over residues 1 to 10 (MQDNSSHSRE) the composition is skewed to basic and acidic residues. Residues 1 to 21 (MQDNSSHSRESASAGDDPLGI) form a disordered region. A coiled-coil region spans residues 63–95 (ENTIDKNIAKFKELLEKCDTLENHYEMLNQLAI).

This sequence belongs to the BLOC1S4 family. In terms of assembly, component of the biogenesis of lysosome-related organelles complex-1 (BLOC-1) composed of at least BLI1, BLS1, CNL1, KXD1, SNN1 and VAB2.

The protein localises to the cytoplasm. Its function is as follows. Component of the biogenesis of lysosome-related organelles complex-1 (BLOC-1), a complex that is involved in endosomal cargo sorting. This Saccharomyces cerevisiae (strain ATCC 204508 / S288c) (Baker's yeast) protein is Biogenesis of lysosome-related organelles complex 1 subunit CNL1 (CNL1).